The sequence spans 165 residues: Anaerobic nitrite reductase GLB1 (165 aa).

A Globin domain is found at 12 to 162 (VFGEEQEALV…LVAAIKREMK (151 aa)). Positions 45-49 (EIAPS) match the Homodimerization motif. Positions 55, 69, 73, 103, 107, and 108 each coordinate heme b. A Homodimerization motif is present at residues 115–127 (DGHFEVTGFALLE).

It belongs to the plant globin family. Homodimer. Heme b serves as cofactor. In terms of tissue distribution, in embryonic organs and at low levels in vegetative organs.

The protein resides in the cytoplasm. Its subcellular location is the nucleus. The catalysed reaction is Fe(III)-heme b-[protein] + nitric oxide + H2O = Fe(II)-heme b-[protein] + nitrite + 2 H(+). Its function is as follows. Phytoglobin that reduces nitrite to nitric oxide (NO) under anoxic conditions (e.g. during flooding or in waterlogged soil). May not function as an oxygen storage or transport protein. Has an unusually high affinity for O(2) through an hexacoordinate heme iron because of a very low dissociation constant. The sequence is that of Anaerobic nitrite reductase GLB1 (HB) from Zea mays (Maize).